Here is a 327-residue protein sequence, read N- to C-terminus: Aspartate--ammonia ligase (327 aa).

It belongs to the class-II aminoacyl-tRNA synthetase family. AsnA subfamily.

Its subcellular location is the cytoplasm. The enzyme catalyses L-aspartate + NH4(+) + ATP = L-asparagine + AMP + diphosphate + H(+). The protein operates within amino-acid biosynthesis; L-asparagine biosynthesis; L-asparagine from L-aspartate (ammonia route): step 1/1. This is Aspartate--ammonia ligase from Bacillus cereus (strain B4264).